The following is a 179-amino-acid chain: FAD-dependent monooxygenase nscC (179 aa).

Positions 1–21 (MGKQQETILIIGAGISGLATS) are cleaved as a signal peptide. FAD is bound by residues E35 and A46. Residue N92 is glycosylated (N-linked (GlcNAc...) asparagine). R119 lines the FAD pocket. The N-linked (GlcNAc...) asparagine glycan is linked to N170.

The protein belongs to the paxM FAD-dependent monooxygenase family. It depends on FAD as a cofactor.

It functions in the pathway secondary metabolite biosynthesis. FAD-dependent monooxygenase; part of the gene cluster that mediates the biosynthesis of neosartoricin B, a prenylated anthracenone that probably exhibits T-cell antiproliferative activity, suggestive of a physiological role as an immunosuppressive agent. The non-reducing polyketide synthase nscA probably synthesizes and cyclizes the decaketide backbone. The hydrolase nscB then mediates the product release through hydrolysis followed by spontaneous decarboxylation. The prenyltransferase nscD catalyzes the addition of the dimethylallyl group to the aromatic C5. The FAD-dependent monooxygenase nscC is then responsible for the stereospecific hydroxylation at C2. Neosartoricin B can be converted into two additional compounds neosartoricins C and D. Neosartoricin C is a spirocyclic compound that is cyclized through the attack of C3 hydroxyl on C14, followed by dehydration. On the other hand, neosartoricin D is a further cyclized compound in which attack of C2 on C14 in neosartoricin C results in the formation of the acetal-containing dioxabicyclo-octanone ring. Both of these compounds are novel and possibly represent related metabolites of the gene cluster. The protein is FAD-dependent monooxygenase nscC of Trichophyton equinum (strain ATCC MYA-4606 / CBS 127.97) (Horse ringworm fungus).